The chain runs to 303 residues: Haloalkane dehalogenase (303 aa).

The region spanning 48 to 192 (PVLLLHGEPS…GTVTKLSQAV (145 aa)) is the AB hydrolase-1 domain. D123 (nucleophile) is an active-site residue. D250 acts as the Proton donor in catalysis. The active-site Proton acceptor is the H280.

The protein belongs to the haloalkane dehalogenase family. Type 1 subfamily. As to quaternary structure, monomer.

The enzyme catalyses 1-haloalkane + H2O = a halide anion + a primary alcohol + H(+). In terms of biological role, catalyzes hydrolytic cleavage of carbon-halogen bonds in halogenated aliphatic compounds, leading to the formation of the corresponding primary alcohols, halide ions and protons. The chain is Haloalkane dehalogenase from Psychrobacter cryohalolentis (strain ATCC BAA-1226 / DSM 17306 / VKM B-2378 / K5).